A 90-amino-acid polypeptide reads, in one-letter code: Large ribosomal subunit protein bL27 (90 aa).

The segment at 1–21 is disordered; that stretch reads MAHKKAGGSSRNGRDSHGKRL.

The protein belongs to the bacterial ribosomal protein bL27 family.

The chain is Large ribosomal subunit protein bL27 from Nitrobacter winogradskyi (strain ATCC 25391 / DSM 10237 / CIP 104748 / NCIMB 11846 / Nb-255).